The chain runs to 436 residues: Calcium/calmodulin-regulated receptor-like kinase 2 (436 aa).

A helical membrane pass occupies residues leucine 7 to tyrosine 34. Positions aspartate 65–asparagine 88 are disordered. Residues threonine 69 to asparagine 88 show a composition bias toward polar residues. The Protein kinase domain maps to glutamine 114–isoleucine 375. ATP contacts are provided by residues leucine 120–valine 128 and lysine 142. A Phosphotyrosine modification is found at tyrosine 187. Residue aspartate 239 is the Proton acceptor of the active site. Phosphothreonine is present on threonine 276. Phosphotyrosine is present on tyrosine 284.

It belongs to the protein kinase superfamily. Ser/Thr protein kinase family.

Its subcellular location is the cell membrane. It carries out the reaction L-seryl-[protein] + ATP = O-phospho-L-seryl-[protein] + ADP + H(+). The enzyme catalyses L-threonyl-[protein] + ATP = O-phospho-L-threonyl-[protein] + ADP + H(+). This is Calcium/calmodulin-regulated receptor-like kinase 2 from Arabidopsis thaliana (Mouse-ear cress).